Here is a 348-residue protein sequence, read N- to C-terminus: MAEELFKTLQNAKECHSLLKKHLTKERFDKLKGLKTKFGGTLADCIRSGCKNPDSGVGIYASDPDAYTVFAEVLDAVIMDYHKIDKVHHPIPDFGDVNNLNIGDLDPSGNMIVSTRVRVGRSHDSFGFPPVLKKDDRIKMEQVSVEALKSLDGELAGSYFPLANMSADVQKQLTEDHFLFNDSDRFLKAASGYDDWPIGRGIYFSENKTFLCWVNEEDHLRLISMQKGGNLGEVYKRLVSAINKMEKKLNFAKKDNMGYLTFCPSNLGTTMRASVHIKIPKLSQRSDFKSICDKYNLQARGIHGEHTESVCGVYDISNKRRMGLTEYEAVTEMMRGVNEIIREETNST.

The Phosphagen kinase N-terminal domain occupies 1–83; it reads MAEELFKTLQ…LDAVIMDYHK (83 aa). Residue 56–60 participates in substrate binding; that stretch reads GVGIY. The Phosphagen kinase C-terminal domain maps to 111 to 347; it reads MIVSTRVRVG…NEIIREETNS (237 aa). ATP is bound by residues 114 to 118 and His177; that span reads STRVR. Residue Glu217 coordinates substrate. Residue Arg221 participates in ATP binding. A substrate-binding site is contributed by Cys263. ATP-binding positions include 272–276 and 300–305; these read RASVH and RGIHGE. Substrate is bound at residue Glu305.

It belongs to the ATP:guanido phosphotransferase family. Muscle (at protein level).

The enzyme catalyses L-arginine + ATP = N(omega)-phospho-L-arginine + ADP + H(+). In terms of biological role, catalyzes the reversible transfer of high energy ATP gamma-phosphate group to L-arginine. The polypeptide is Arginine kinase Oct f 2 (Amphioctopus fangsiao (Ocellated octopus)).